A 237-amino-acid polypeptide reads, in one-letter code: Ribosomal RNA small subunit methyltransferase G (237 aa).

S-adenosyl-L-methionine-binding positions include Gly-78, Phe-83, 129 to 130 (AE), and Arg-146.

Belongs to the methyltransferase superfamily. RNA methyltransferase RsmG family.

It is found in the cytoplasm. Specifically methylates the N7 position of a guanine in 16S rRNA. In Mesoplasma florum (strain ATCC 33453 / NBRC 100688 / NCTC 11704 / L1) (Acholeplasma florum), this protein is Ribosomal RNA small subunit methyltransferase G.